We begin with the raw amino-acid sequence, 176 residues long: Acireductone dioxygenase (176 aa).

The Fe(2+) site is built by H91, H93, E97, and H136. Ni(2+) contacts are provided by H91, H93, E97, and H136.

This sequence belongs to the acireductone dioxygenase (ARD) family. Monomer. It depends on Fe(2+) as a cofactor. The cofactor is Ni(2+).

It carries out the reaction 1,2-dihydroxy-5-(methylsulfanyl)pent-1-en-3-one + O2 = 3-(methylsulfanyl)propanoate + CO + formate + 2 H(+). It catalyses the reaction 1,2-dihydroxy-5-(methylsulfanyl)pent-1-en-3-one + O2 = 4-methylsulfanyl-2-oxobutanoate + formate + 2 H(+). It functions in the pathway amino-acid biosynthesis; L-methionine biosynthesis via salvage pathway; L-methionine from S-methyl-5-thio-alpha-D-ribose 1-phosphate: step 5/6. Functionally, catalyzes 2 different reactions between oxygen and the acireductone 1,2-dihydroxy-3-keto-5-methylthiopentene (DHK-MTPene) depending upon the metal bound in the active site. Fe-containing acireductone dioxygenase (Fe-ARD) produces formate and 2-keto-4-methylthiobutyrate (KMTB), the alpha-ketoacid precursor of methionine in the methionine recycle pathway. Ni-containing acireductone dioxygenase (Ni-ARD) produces methylthiopropionate, carbon monoxide and formate, and does not lie on the methionine recycle pathway. The chain is Acireductone dioxygenase from Picosynechococcus sp. (strain ATCC 27264 / PCC 7002 / PR-6) (Agmenellum quadruplicatum).